The chain runs to 63 residues: Large ribosomal subunit protein uL29 (63 aa).

Belongs to the universal ribosomal protein uL29 family.

The chain is Large ribosomal subunit protein uL29 from Proteus mirabilis (strain HI4320).